Here is a 227-residue protein sequence, read N- to C-terminus: Cytochrome c oxidase subunit 2 (227 aa).

Topologically, residues methionine 1–serine 14 are mitochondrial intermembrane. A helical membrane pass occupies residues proline 15–methionine 45. Over leucine 46–glutamine 59 the chain is Mitochondrial matrix. Residues glutamate 60–methionine 87 traverse the membrane as a helical segment. Residues aspartate 88–isoleucine 227 are Mitochondrial intermembrane-facing. Cu cation contacts are provided by histidine 161, cysteine 196, glutamate 198, cysteine 200, histidine 204, and methionine 207. Residue glutamate 198 participates in Mg(2+) binding.

The protein belongs to the cytochrome c oxidase subunit 2 family. In terms of assembly, component of the cytochrome c oxidase (complex IV, CIV), a multisubunit enzyme composed of 14 subunits. The complex is composed of a catalytic core of 3 subunits MT-CO1, MT-CO2 and MT-CO3, encoded in the mitochondrial DNA, and 11 supernumerary subunits COX4I, COX5A, COX5B, COX6A, COX6B, COX6C, COX7A, COX7B, COX7C, COX8 and NDUFA4, which are encoded in the nuclear genome. The complex exists as a monomer or a dimer and forms supercomplexes (SCs) in the inner mitochondrial membrane with NADH-ubiquinone oxidoreductase (complex I, CI) and ubiquinol-cytochrome c oxidoreductase (cytochrome b-c1 complex, complex III, CIII), resulting in different assemblies (supercomplex SCI(1)III(2)IV(1) and megacomplex MCI(2)III(2)IV(2)). Found in a complex with TMEM177, COA6, COX18, COX20, SCO1 and SCO2. Interacts with TMEM177 in a COX20-dependent manner. Interacts with COX20. Interacts with COX16. Requires Cu cation as cofactor.

The protein localises to the mitochondrion inner membrane. The enzyme catalyses 4 Fe(II)-[cytochrome c] + O2 + 8 H(+)(in) = 4 Fe(III)-[cytochrome c] + 2 H2O + 4 H(+)(out). In terms of biological role, component of the cytochrome c oxidase, the last enzyme in the mitochondrial electron transport chain which drives oxidative phosphorylation. The respiratory chain contains 3 multisubunit complexes succinate dehydrogenase (complex II, CII), ubiquinol-cytochrome c oxidoreductase (cytochrome b-c1 complex, complex III, CIII) and cytochrome c oxidase (complex IV, CIV), that cooperate to transfer electrons derived from NADH and succinate to molecular oxygen, creating an electrochemical gradient over the inner membrane that drives transmembrane transport and the ATP synthase. Cytochrome c oxidase is the component of the respiratory chain that catalyzes the reduction of oxygen to water. Electrons originating from reduced cytochrome c in the intermembrane space (IMS) are transferred via the dinuclear copper A center (CU(A)) of subunit 2 and heme A of subunit 1 to the active site in subunit 1, a binuclear center (BNC) formed by heme A3 and copper B (CU(B)). The BNC reduces molecular oxygen to 2 water molecules using 4 electrons from cytochrome c in the IMS and 4 protons from the mitochondrial matrix. The chain is Cytochrome c oxidase subunit 2 (MT-CO2) from Anisomys imitator (Uneven-toothed rat).